A 513-amino-acid chain; its full sequence is Interferon alpha/beta receptor 2 (513 aa).

Positions 1-21 are cleaved as a signal peptide; that stretch reads MRSRCTVSAVGLLSLCLVVSA. Residues 22–242 are Extracellular-facing; that stretch reads SLETITPSAF…GQESGLSESA (221 aa). Disulfide bonds link cysteine 39–cysteine 123 and cysteine 85–cysteine 93. Asparagine 42, asparagine 58, asparagine 65, asparagine 78, and asparagine 84 each carry an N-linked (GlcNAc...) asparagine glycan. N-linked (GlcNAc...) asparagine glycans are attached at residues asparagine 149, asparagine 191, and asparagine 195. Cysteines 210 and 227 form a disulfide. Residues 243–263 traverse the membrane as a helical segment; sequence IVGITTSCLVVMVFVSTIVML. Residues 264–513 are Cytoplasmic-facing; sequence KRIGYICLKD…ADVGDGYIMR (250 aa). The tract at residues 334–402 is disordered; sequence GYTMHGLTGK…DPTGPYERRK (69 aa). Tyrosine 335 carries the post-translational modification Phosphotyrosine. Residues 344–354 are compositionally biased toward polar residues; sequence PLQQTSDTSAS. The span at 377 to 389 shows a compositional bias: low complexity; the sequence is GAEPELPTEAGAG. At serine 403 the chain carries Phosphoserine. Residues 421-444 are mediates interaction with STAT2 (and required for the recruitment of USP18); sequence GDNIIFNVNLNSVFLRVLHDEDAS. Residues serine 448 and serine 465 each carry the phosphoserine modification. The tract at residues 458–513 is disordered; the sequence is EGPQRTESDLRIAGGDRTQPPLPSLPSQDLWTEDGSSEKSDTSDSDADVGDGYIMR. At tyrosine 510 the chain carries Phosphotyrosine.

This sequence belongs to the type II cytokine receptor family. Heterodimer with IFNAR1; forming the receptor for type I interferon. Interacts with the transcriptional factors STAT1 and STAT2. Interacts with JAK1. Interacts with USP18; indirectly via STAT2, it negatively regulates the assembly of the ternary interferon-IFNAR1-IFNAR2 complex and therefore type I interferon signaling. Post-translationally, phosphorylated on tyrosine residues upon interferon binding. Phosphorylation at Tyr-335 or Tyr-510 are sufficient to mediate interferon dependent activation of STAT1, STAT2 and STAT3 leading to antiproliferative effects on many different cell types. As to expression, widely expressed. Detected in liver, testis, kidney, salivary gland, thymus, brain, lung and placenta. Isoform 1, isoform 2 and isoform 3 are expressed in brain.

The protein resides in the cell membrane. It localises to the secreted. Functionally, together with IFNAR1, forms the heterodimeric receptor for type I interferons (including interferons alpha, beta, epsilon, omega and kappa). Type I interferon binding activates the JAK-STAT signaling cascade, resulting in transcriptional activation or repression of interferon-regulated genes that encode the effectors of the interferon response. Mechanistically, type I interferon-binding brings the IFNAR1 and IFNAR2 subunits into close proximity with one another, driving their associated Janus kinases (JAKs) (TYK2 bound to IFNAR1 and JAK1 bound to IFNAR2) to cross-phosphorylate one another. The activated kinases phosphorylate specific tyrosine residues on the intracellular domains of IFNAR1 and IFNAR2, forming docking sites for the STAT transcription factors (STAT1, STAT2 and STAT). STAT proteins are then phosphorylated by the JAKs, promoting their translocation into the nucleus to regulate expression of interferon-regulated genes. In terms of biological role, may be potent inhibitors of type I IFN receptor activity. The protein is Interferon alpha/beta receptor 2 (Ifnar2) of Mus musculus (Mouse).